The following is a 283-amino-acid chain: Diaminopimelate epimerase (283 aa).

Positions 13, 45, and 65 each coordinate substrate. Cys-74 (proton donor) is an active-site residue. Residues 75 to 76 (GN), Asn-156, Asn-190, and 208 to 209 (ER) contribute to the substrate site. Residue Cys-217 is the Proton acceptor of the active site. 218 to 219 (GS) lines the substrate pocket.

The protein belongs to the diaminopimelate epimerase family. In terms of assembly, homodimer.

Its subcellular location is the cytoplasm. It catalyses the reaction (2S,6S)-2,6-diaminopimelate = meso-2,6-diaminopimelate. Its pathway is amino-acid biosynthesis; L-lysine biosynthesis via DAP pathway; DL-2,6-diaminopimelate from LL-2,6-diaminopimelate: step 1/1. Catalyzes the stereoinversion of LL-2,6-diaminopimelate (L,L-DAP) to meso-diaminopimelate (meso-DAP), a precursor of L-lysine and an essential component of the bacterial peptidoglycan. The protein is Diaminopimelate epimerase of Bartonella henselae (strain ATCC 49882 / DSM 28221 / CCUG 30454 / Houston 1) (Rochalimaea henselae).